The primary structure comprises 530 residues: UPF0422 protein lpg2959 (530 aa).

Positions 1 to 19 are cleaved as a signal peptide; sequence MKFKKIILALACLSSPLYA. Residues 20 to 66 are a coiled coil; sequence DQDQQLKSEIQRLQHQAEDLQAQLNRLQKQLANHKSSQQKHEQQAAA. The tract at residues 50-81 is disordered; the sequence is LANHKSSQQKHEQQAAAKPAEPQSKPTVKSGA. Residues 63 to 75 show a composition bias toward low complexity; that stretch reads QAAAKPAEPQSKP.

Belongs to the UPF0422 family.

The protein is UPF0422 protein lpg2959 of Legionella pneumophila subsp. pneumophila (strain Philadelphia 1 / ATCC 33152 / DSM 7513).